A 459-amino-acid chain; its full sequence is Cysteine--tRNA ligase (459 aa).

Cys-28 lines the Zn(2+) pocket. A 'HIGH' region motif is present at residues 30-40 (MTVYDFCHLGH). The Zn(2+) site is built by Cys-209, His-234, and Glu-238. The short motif at 266–270 (KMAKS) is the 'KMSKS' region element. Position 269 (Lys-269) interacts with ATP. Residues 440-459 (QARGIELEDTPEGTKWRRTR) form a disordered region.

Belongs to the class-I aminoacyl-tRNA synthetase family. In terms of assembly, monomer. The cofactor is Zn(2+).

The protein resides in the cytoplasm. It carries out the reaction tRNA(Cys) + L-cysteine + ATP = L-cysteinyl-tRNA(Cys) + AMP + diphosphate. This is Cysteine--tRNA ligase from Halorhodospira halophila (strain DSM 244 / SL1) (Ectothiorhodospira halophila (strain DSM 244 / SL1)).